Consider the following 180-residue polypeptide: Small ribosomal subunit protein bS18 (180 aa).

2 disordered regions span residues 1 to 26 (MKNK…AHKV) and 53 to 82 (YSDK…DKES).

The protein belongs to the bacterial ribosomal protein bS18 family. In terms of assembly, part of the 30S ribosomal subunit. Forms a tight heterodimer with protein bS6.

Its function is as follows. Binds as a heterodimer with protein bS6 to the central domain of the 16S rRNA, where it helps stabilize the platform of the 30S subunit. In Karelsulcia muelleri (strain GWSS) (Sulcia muelleri), this protein is Small ribosomal subunit protein bS18.